Consider the following 389-residue polypeptide: Methylthioribose-1-phosphate isomerase (389 aa).

The Proton donor role is filled by Asp258.

This sequence belongs to the eIF-2B alpha/beta/delta subunits family. MtnA subfamily.

It is found in the cytoplasm. The protein resides in the nucleus. It carries out the reaction 5-(methylsulfanyl)-alpha-D-ribose 1-phosphate = 5-(methylsulfanyl)-D-ribulose 1-phosphate. It participates in amino-acid biosynthesis; L-methionine biosynthesis via salvage pathway; L-methionine from S-methyl-5-thio-alpha-D-ribose 1-phosphate: step 1/6. Its function is as follows. Catalyzes the interconversion of methylthioribose-1-phosphate (MTR-1-P) into methylthioribulose-1-phosphate (MTRu-1-P). The polypeptide is Methylthioribose-1-phosphate isomerase (Chaetomium globosum (strain ATCC 6205 / CBS 148.51 / DSM 1962 / NBRC 6347 / NRRL 1970) (Soil fungus)).